Here is a 282-residue protein sequence, read N- to C-terminus: Pantothenate synthetase (282 aa).

Residue 26 to 33 coordinates ATP; sequence MGNLHEGH. The Proton donor role is filled by His-33. Gln-57 is a binding site for (R)-pantoate. Gln-57 is a beta-alanine binding site. 144-147 contributes to the ATP binding site; that stretch reads GKKD. Gln-150 contacts (R)-pantoate. Residues Ile-173 and 181–184 contribute to the ATP site; that span reads LSSR.

The protein belongs to the pantothenate synthetase family. As to quaternary structure, homodimer.

It is found in the cytoplasm. It catalyses the reaction (R)-pantoate + beta-alanine + ATP = (R)-pantothenate + AMP + diphosphate + H(+). Its pathway is cofactor biosynthesis; (R)-pantothenate biosynthesis; (R)-pantothenate from (R)-pantoate and beta-alanine: step 1/1. Its function is as follows. Catalyzes the condensation of pantoate with beta-alanine in an ATP-dependent reaction via a pantoyl-adenylate intermediate. This chain is Pantothenate synthetase, found in Cupriavidus necator (strain ATCC 17699 / DSM 428 / KCTC 22496 / NCIMB 10442 / H16 / Stanier 337) (Ralstonia eutropha).